The primary structure comprises 245 residues: Uridylate kinase (245 aa).

Residue 16-19 (KLSG) coordinates ATP. The tract at residues 24–29 (GDNGFG) is involved in allosteric activation by GTP. A UMP-binding site is contributed by G59. G60 and R64 together coordinate ATP. UMP-binding positions include D78 and 139 to 146 (NGAPFFTT). N167, Y173, and D176 together coordinate ATP.

The protein belongs to the UMP kinase family. In terms of assembly, homohexamer.

It localises to the cytoplasm. The enzyme catalyses UMP + ATP = UDP + ADP. The protein operates within pyrimidine metabolism; CTP biosynthesis via de novo pathway; UDP from UMP (UMPK route): step 1/1. Its activity is regulated as follows. Allosterically activated by GTP. Inhibited by UTP. Functionally, catalyzes the reversible phosphorylation of UMP to UDP. This chain is Uridylate kinase, found in Deinococcus radiodurans (strain ATCC 13939 / DSM 20539 / JCM 16871 / CCUG 27074 / LMG 4051 / NBRC 15346 / NCIMB 9279 / VKM B-1422 / R1).